Consider the following 111-residue polypeptide: Probable 4-amino-4-deoxy-L-arabinose-phosphoundecaprenol flippase subunit ArnE (111 aa).

A run of 3 helical transmembrane segments spans residues Trp-39–Gln-59, Val-61–Ala-81, and Val-89–Val-109. An EamA domain is found at Leu-40 to Val-109.

The protein belongs to the ArnE family. Heterodimer of ArnE and ArnF.

Its subcellular location is the cell inner membrane. The protein operates within bacterial outer membrane biogenesis; lipopolysaccharide biosynthesis. Functionally, translocates 4-amino-4-deoxy-L-arabinose-phosphoundecaprenol (alpha-L-Ara4N-phosphoundecaprenol) from the cytoplasmic to the periplasmic side of the inner membrane. The chain is Probable 4-amino-4-deoxy-L-arabinose-phosphoundecaprenol flippase subunit ArnE from Sodalis glossinidius (strain morsitans).